The chain runs to 274 residues: 2,3,4,5-tetrahydropyridine-2,6-dicarboxylate N-succinyltransferase (274 aa).

Positions 104 and 141 each coordinate substrate.

Belongs to the transferase hexapeptide repeat family. As to quaternary structure, homotrimer.

The protein localises to the cytoplasm. The catalysed reaction is (S)-2,3,4,5-tetrahydrodipicolinate + succinyl-CoA + H2O = (S)-2-succinylamino-6-oxoheptanedioate + CoA. It participates in amino-acid biosynthesis; L-lysine biosynthesis via DAP pathway; LL-2,6-diaminopimelate from (S)-tetrahydrodipicolinate (succinylase route): step 1/3. The protein is 2,3,4,5-tetrahydropyridine-2,6-dicarboxylate N-succinyltransferase of Serratia proteamaculans (strain 568).